The chain runs to 250 residues: 4-hydroxy-tetrahydrodipicolinate reductase (250 aa).

NAD(+) is bound by residues 10-15 (GAKGRI), 78-80 (GTT), and 105-108 (APNF). Histidine 135 (proton donor/acceptor) is an active-site residue. Residue histidine 136 coordinates (S)-2,3,4,5-tetrahydrodipicolinate. Lysine 139 (proton donor) is an active-site residue. Residue 145-146 (GT) participates in (S)-2,3,4,5-tetrahydrodipicolinate binding.

Belongs to the DapB family.

It is found in the cytoplasm. The enzyme catalyses (S)-2,3,4,5-tetrahydrodipicolinate + NAD(+) + H2O = (2S,4S)-4-hydroxy-2,3,4,5-tetrahydrodipicolinate + NADH + H(+). The catalysed reaction is (S)-2,3,4,5-tetrahydrodipicolinate + NADP(+) + H2O = (2S,4S)-4-hydroxy-2,3,4,5-tetrahydrodipicolinate + NADPH + H(+). The protein operates within amino-acid biosynthesis; L-lysine biosynthesis via DAP pathway; (S)-tetrahydrodipicolinate from L-aspartate: step 4/4. In terms of biological role, catalyzes the conversion of 4-hydroxy-tetrahydrodipicolinate (HTPA) to tetrahydrodipicolinate. This chain is 4-hydroxy-tetrahydrodipicolinate reductase, found in Streptomyces coelicolor (strain ATCC BAA-471 / A3(2) / M145).